Here is a 287-residue protein sequence, read N- to C-terminus: MEGKEEDVRLGANKFTERQPIGTAAQSQDKDYKEPPPAPLFEPGELSSWSFYRAGIAEFVATFLFLYITILTVMGVVKSSTKCSTVGIQGIAWAFGGMIFALVYCTAGISGGHINPAVTFGLFLARKLSLTRALFYMVMQCLGAICGAGVVKGFQKGLYENNGGGANVVAPGYTKGDGLGAEIVGTFILVYTVFSATDAKRSARDSHVPILAPLPIGFAVFLVHLATIPITGTGINPARSLGAAIIYNKGHAWDDHWIFWVGPFIGAALAALYHQVVIRAIPFKSRS.

Positions 1-37 are disordered; sequence MEGKEEDVRLGANKFTERQPIGTAAQSQDKDYKEPPP. Residues 1–55 are Cytoplasmic-facing; it reads MEGKEEDVRLGANKFTERQPIGTAAQSQDKDYKEPPPAPLFEPGELSSWSFYRAG. A helical transmembrane segment spans residues 56-76; sequence IAEFVATFLFLYITILTVMGV. Residues 77 to 89 are Extracellular-facing; sequence VKSSTKCSTVGIQ. The helical transmembrane segment at 90 to 110 threads the bilayer; it reads GIAWAFGGMIFALVYCTAGIS. Residues 111–133 are Cytoplasmic-facing; that stretch reads GGHINPAVTFGLFLARKLSLTRA. An NPA 1 motif is present at residues 115–117; that stretch reads NPA. Residues 134-154 form a helical membrane-spanning segment; the sequence is LFYMVMQCLGAICGAGVVKGF. Residues 155-175 are Extracellular-facing; that stretch reads QKGLYENNGGGANVVAPGYTK. A helical membrane pass occupies residues 176 to 196; it reads GDGLGAEIVGTFILVYTVFSA. Residues 197–209 are Cytoplasmic-facing; that stretch reads TDAKRSARDSHVP. Residues 210-230 traverse the membrane as a helical segment; sequence ILAPLPIGFAVFLVHLATIPI. Over 231-257 the chain is Extracellular; sequence TGTGINPARSLGAAIIYNKGHAWDDHW. The NPA 2 motif lies at 236–238; that stretch reads NPA. The helical transmembrane segment at 258–278 threads the bilayer; sequence IFWVGPFIGAALAALYHQVVI. Residues 279 to 287 lie on the Cytoplasmic side of the membrane; the sequence is RAIPFKSRS.

This sequence belongs to the MIP/aquaporin (TC 1.A.8) family. PIP (TC 1.A.8.11) subfamily. Barely detectable in roots, leaves and fruits.

Its subcellular location is the cell membrane. Its function is as follows. Water channel required to facilitate the transport of water across cell membrane; mercury-insensitive. Contributes to the tolerance to multiple abiotic stresses including salt (NaCl), cold and water deprivation, by modulating cytosolic K(+)/Na(+) ratio, maintaining osmotic balance, and reducing membrane injury (e.g. oxidative injury). The protein is Aquaporin PIP1-2 of Musa acuminata subsp. malaccensis (Wild banana).